Consider the following 167-residue polypeptide: Leptin (167 aa).

Positions 1–21 are cleaved as a signal peptide; it reads MCWRPLCRFLWLWSYLSYVQA. Cys117 and Cys167 form a disulfide bridge.

The protein belongs to the leptin family.

The protein localises to the secreted. Functionally, key player in the regulation of energy balance and body weight control. Once released into the circulation, has central and peripheral effects by binding LEPR, found in many tissues, which results in the activation of several major signaling pathways. In the hypothalamus, acts as an appetite-regulating factor that induces a decrease in food intake and an increase in energy consumption by inducing anorexinogenic factors and suppressing orexigenic neuropeptides, also regulates bone mass and secretion of hypothalamo-pituitary-adrenal hormones. In the periphery, increases basal metabolism, influences reproductive function, regulates pancreatic beta-cell function and insulin secretion, is pro-angiogenic for endothelial cell and affects innate and adaptive immunity. In the arcuate nucleus of the hypothalamus, activates by depolarization POMC neurons inducing FOS and SOCS3 expression to release anorexigenic peptides and inhibits by hyperpolarization NPY neurons inducing SOCS3 with a consequent reduction on release of orexigenic peptides. In addition to its known satiety inducing effect, has a modulatory role in nutrient absorption. In the intestine, reduces glucose absorption by enterocytes by activating PKC and leading to a sequential activation of p38, PI3K and ERK signaling pathways which exerts an inhibitory effect on glucose absorption. Acts as a growth factor on certain tissues, through the activation of different signaling pathways increases expression of genes involved in cell cycle regulation such as CCND1, via JAK2-STAT3 pathway, or VEGFA, via MAPK1/3 and PI3K-AKT1 pathways. May also play an apoptotic role via JAK2-STAT3 pathway and up-regulation of BIRC5 expression. Pro-angiogenic, has mitogenic activity on vascular endothelial cells and plays a role in matrix remodeling by regulating the expression of matrix metalloproteinases (MMPs) and tissue inhibitors of metalloproteinases (TIMPs). In innate immunity, modulates the activity and function of neutrophils by increasing chemotaxis and the secretion of oxygen radicals. Increases phagocytosis by macrophages and enhances secretion of pro-inflammatory mediators. Increases cytotoxic ability of NK cells. Plays a pro-inflammatory role, in synergy with IL1B, by inducing NOS2 which promotes the production of IL6, IL8 and Prostaglandin E2, through a signaling pathway that involves JAK2, PI3K, MAP2K1/MEK1 and MAPK14/p38. In adaptive immunity, promotes the switch of memory T-cells towards T helper-1 cell immune responses. Increases CD4(+)CD25(-) T cells proliferation and reduces autophagy during TCR (T cell receptor) stimulation, through MTOR signaling pathway activation and BCL2 up-regulation. In Mus musculus (Mouse), this protein is Leptin (Lep).